A 119-amino-acid polypeptide reads, in one-letter code: Large ribosomal subunit protein uL22c (119 aa).

The protein belongs to the universal ribosomal protein uL22 family. As to quaternary structure, part of the 50S ribosomal subunit.

The protein localises to the plastid. Its subcellular location is the chloroplast. Functionally, this protein binds specifically to 23S rRNA. In terms of biological role, the globular domain of the protein is located near the polypeptide exit tunnel on the outside of the subunit, while an extended beta-hairpin is found that lines the wall of the exit tunnel in the center of the 70S ribosome. The chain is Large ribosomal subunit protein uL22c (rpl22) from Chaetosphaeridium globosum (Charophycean green alga).